Consider the following 968-residue polypeptide: RNA polymerase-associated protein RapA (968 aa).

The Helicase ATP-binding domain occupies 163 to 332 (EVGRRYAPRV…FARLRLLDPD (170 aa)). ATP is bound at residue 176 to 183 (DEVGLGKT). Residues 278-281 (DEAH) carry the DEAH box motif. The region spanning 491 to 655 (RVDWLIEFLK…EFAEDLLNVL (165 aa)) is the Helicase C-terminal domain.

It belongs to the SNF2/RAD54 helicase family. RapA subfamily. Interacts with the RNAP. Has a higher affinity for the core RNAP than for the holoenzyme. Its ATPase activity is stimulated by binding to RNAP.

In terms of biological role, transcription regulator that activates transcription by stimulating RNA polymerase (RNAP) recycling in case of stress conditions such as supercoiled DNA or high salt concentrations. Probably acts by releasing the RNAP, when it is trapped or immobilized on tightly supercoiled DNA. Does not activate transcription on linear DNA. Probably not involved in DNA repair. The polypeptide is RNA polymerase-associated protein RapA (Shewanella baltica (strain OS155 / ATCC BAA-1091)).